Consider the following 571-residue polypeptide: Potassium-transporting ATPase potassium-binding subunit (571 aa).

10 helical membrane-spanning segments follow: residues 7 to 27, 66 to 86, 137 to 157, 188 to 208, 255 to 275, 286 to 306, 390 to 410, 430 to 450, 497 to 517, and 538 to 558; these read LQFA…GGYL, TYAL…YGIA, GLAV…AALI, FVVA…GFIV, IGNF…CFAF, WAVL…AMSF, VGLN…GLMV, TLYI…SVLI, IGVA…AIAG, and LFVG…FFPA.

This sequence belongs to the KdpA family. The system is composed of three essential subunits: KdpA, KdpB and KdpC.

The protein resides in the cell membrane. Its function is as follows. Part of the high-affinity ATP-driven potassium transport (or Kdp) system, which catalyzes the hydrolysis of ATP coupled with the electrogenic transport of potassium into the cytoplasm. This subunit binds the extracellular potassium ions and delivers the ions to the membrane domain of KdpB through an intramembrane tunnel. The chain is Potassium-transporting ATPase potassium-binding subunit from Mycobacterium bovis (strain ATCC BAA-935 / AF2122/97).